Here is a 44-residue protein sequence, read N- to C-terminus: Protein PsbN (44 aa).

A helical transmembrane segment spans residues 6 to 26; the sequence is FFFTIFVWFLLISVTGYSIYV.

The protein belongs to the PsbN family.

The protein localises to the plastid. It localises to the chloroplast thylakoid membrane. Its function is as follows. May play a role in photosystem I and II biogenesis. This is Protein PsbN from Bigelowiella natans (Pedinomonas minutissima).